Consider the following 208-residue polypeptide: Histone H1t (208 aa).

Residues 1 to 16 are compositionally biased toward low complexity; sequence MSETVPAASAGAVPAV. The disordered stretch occupies residues 1–40; the sequence is MSETVPAASAGAVPAVMEKPLTKKRGKKPAGLTSASRKAP. At Ser-9 the chain carries Phosphoserine. Residues 40-113 form the H15 domain; sequence PNLSVSKLIT…GASGSFKLSK (74 aa). At Arg-58 the chain carries Citrulline. The tract at residues 102 to 208 is disordered; that stretch reads GTGASGSFKL…ANIRKATSRK (107 aa). Residues 111-136 show a composition bias toward basic residues; the sequence is LSKKVLPKSTRRKANKSASAKTKKLV. Phosphoserine is present on Ser-143. Residues 148–157 are compositionally biased toward basic residues; it reads KTNKRAKKPR. Residue Thr-159 is modified to Phosphothreonine. Residues 163 to 175 show a composition bias toward basic residues; sequence KAVRSGRKAKGAK. Phosphoserine occurs at positions 167 and 182. Residues 187-208 show a composition bias toward basic residues; the sequence is RATKPKLTQHHKANIRKATSRK.

The protein belongs to the histone H1/H5 family. Phosphorylated in early spermatids. Post-translationally, citrullination at Arg-58 (H1R54ci) by PADI4 takes place within the DNA-binding site of H1 and results in its displacement from chromatin and global chromatin decondensation, thereby promoting pluripotency and stem cell maintenance.

In terms of biological role, testis-specific histone H1 that forms less compacted chromatin compared to other H1 histone subtypes. Formation of more relaxed chromatin may be required to promote chromatin architecture required for proper chromosome regulation during meiosis, such as homologous recombination. Histones H1 act as linkers that bind to nucleosomes and compact polynucleosomes into a higher-order chromatin configuration. The polypeptide is Histone H1t (Macaca mulatta (Rhesus macaque)).